Consider the following 260-residue polypeptide: Acyl-[acyl-carrier-protein]--UDP-N-acetylglucosamine O-acyltransferase (260 aa).

This sequence belongs to the transferase hexapeptide repeat family. LpxA subfamily. In terms of assembly, homotrimer.

Its subcellular location is the cytoplasm. The catalysed reaction is a (3R)-hydroxyacyl-[ACP] + UDP-N-acetyl-alpha-D-glucosamine = a UDP-3-O-[(3R)-3-hydroxyacyl]-N-acetyl-alpha-D-glucosamine + holo-[ACP]. Its pathway is glycolipid biosynthesis; lipid IV(A) biosynthesis; lipid IV(A) from (3R)-3-hydroxytetradecanoyl-[acyl-carrier-protein] and UDP-N-acetyl-alpha-D-glucosamine: step 1/6. Its function is as follows. Involved in the biosynthesis of lipid A, a phosphorylated glycolipid that anchors the lipopolysaccharide to the outer membrane of the cell. This chain is Acyl-[acyl-carrier-protein]--UDP-N-acetylglucosamine O-acyltransferase, found in Aliarcobacter butzleri (strain RM4018) (Arcobacter butzleri).